A 68-amino-acid chain; its full sequence is Peptide Hp1090 (68 aa).

Residues 1–23 (MKTQFAIFLITLVLFQMFSQSDA) form the signal peptide. The residue at position 36 (phenylalanine 36) is a Phenylalanine amide. Residues 40–68 (GLSDLDDLDESFDGEVSQADIDFLKELMQ) constitute a propeptide that is removed on maturation.

Belongs to the non-disulfide-bridged peptide (NDBP) superfamily. Short antimicrobial peptide (group 4) family. Expressed by the venom gland.

The protein localises to the secreted. It localises to the target cell membrane. Its function is as follows. Amphipathic peptide which inhibits the growth of Gram-positive bacteria. This chain is Peptide Hp1090, found in Heterometrus petersii (Asian forest scorpion).